A 719-amino-acid chain; its full sequence is Pesticidal crystal protein Cry1Ib (719 aa).

The protein belongs to the delta endotoxin family.

Promotes colloidosmotic lysis by binding to the midgut epithelial cells of certain coleopteran and lepidopteran species. Active on Plutella xylostella but not on Bombyx mori. The polypeptide is Pesticidal crystal protein Cry1Ib (cry1Ib) (Bacillus thuringiensis subsp. entomocidus).